The chain runs to 295 residues: Small ribosomal subunit protein uS2B (295 aa).

S2 carries the N-acetylserine modification. The interval T54 to Q113 is interaction with PPP1R16B. 2 laminin-binding regions span residues I161–R180 and R205–G229. Over residues A218–F227 the composition is skewed to basic and acidic residues. Residues A218–Q242 form a disordered region. [DE]-W-[ST] repeat units lie at residues E230–T232, D247–S249, D266–S268, D275–S277, and D293–S295. The tract at residues Q242–S295 is laminin-binding. The interval D266 to S295 is disordered.

Belongs to the universal ribosomal protein uS2 family. As to quaternary structure, monomer (37LRP) and homodimer (67LR). Component of the small ribosomal subunit. Mature ribosomes consist of a small (40S) and a large (60S) subunit. The 40S subunit contains about 33 different proteins and 1 molecule of RNA (18S). The 60S subunit contains about 49 different proteins and 3 molecules of RNA (28S, 5.8S and 5S). Interacts with RPS21. Interacts with several laminins including at least LAMB1. Interacts with MDK. The mature dimeric form interacts with PPP1R16B (via its fourth ankyrin repeat). Interacts with PPP1CA only in the presence of PPP1R16B. Acylated. Acylation may be a prerequisite for conversion of the monomeric 37 kDa laminin receptor precursor (37LRP) to the mature dimeric 67 kDa laminin receptor (67LR), and may provide a mechanism for membrane association. Post-translationally, cleaved by stromelysin-3 (ST3) at the cell surface. Cleavage by stromelysin-3 may be a mechanism to alter cell-extracellular matrix interactions.

It localises to the cell membrane. The protein localises to the cytoplasm. The protein resides in the nucleus. Its function is as follows. Required for the assembly and/or stability of the 40S ribosomal subunit. Required for the processing of the 20S rRNA-precursor to mature 18S rRNA in a late step of the maturation of 40S ribosomal subunits. Also functions as a cell surface receptor for laminin. Plays a role in cell adhesion to the basement membrane and in the consequent activation of signaling transduction pathways. May play a role in cell fate determination and tissue morphogenesis. Also acts as a receptor for several other ligands, including the pathogenic prion protein, viruses, and bacteria. Acts as a PPP1R16B-dependent substrate of PPP1CA. This Homo sapiens (Human) protein is Small ribosomal subunit protein uS2B.